Consider the following 400-residue polypeptide: Formate-dependent phosphoribosylglycinamide formyltransferase (400 aa).

N(1)-(5-phospho-beta-D-ribosyl)glycinamide is bound by residues 22–23 and E82; that span reads EL. ATP contacts are provided by residues R115, K157, 162–167, 197–200, and E205; these read SSGKGQ and EGFI. An ATP-grasp domain is found at 120–315; the sequence is RLAAETLGLP…EFELHARAIL (196 aa). Mg(2+) is bound by residues E274 and E286. N(1)-(5-phospho-beta-D-ribosyl)glycinamide is bound by residues D293, K362, and 369 to 370; that span reads RR.

This sequence belongs to the PurK/PurT family. In terms of assembly, homodimer.

It carries out the reaction N(1)-(5-phospho-beta-D-ribosyl)glycinamide + formate + ATP = N(2)-formyl-N(1)-(5-phospho-beta-D-ribosyl)glycinamide + ADP + phosphate + H(+). It functions in the pathway purine metabolism; IMP biosynthesis via de novo pathway; N(2)-formyl-N(1)-(5-phospho-D-ribosyl)glycinamide from N(1)-(5-phospho-D-ribosyl)glycinamide (formate route): step 1/1. Its function is as follows. Involved in the de novo purine biosynthesis. Catalyzes the transfer of formate to 5-phospho-ribosyl-glycinamide (GAR), producing 5-phospho-ribosyl-N-formylglycinamide (FGAR). Formate is provided by PurU via hydrolysis of 10-formyl-tetrahydrofolate. The polypeptide is Formate-dependent phosphoribosylglycinamide formyltransferase (Cupriavidus metallidurans (strain ATCC 43123 / DSM 2839 / NBRC 102507 / CH34) (Ralstonia metallidurans)).